Here is a 336-residue protein sequence, read N- to C-terminus: Dihydroorotate dehydrogenase (quinone) (336 aa).

FMN-binding positions include 62 to 66 (AGLDK) and Thr86. A substrate-binding site is contributed by Lys66. 111-115 (NRMGF) lines the substrate pocket. FMN contacts are provided by Asn139 and Asn172. Residue Asn172 participates in substrate binding. Ser175 serves as the catalytic Nucleophile. A substrate-binding site is contributed by Asn177. Residues Lys217 and Thr245 each contribute to the FMN site. 246-247 (NT) contacts substrate. Residues Gly268, Gly297, and 318–319 (YS) contribute to the FMN site.

This sequence belongs to the dihydroorotate dehydrogenase family. Type 2 subfamily. In terms of assembly, monomer. It depends on FMN as a cofactor.

Its subcellular location is the cell membrane. The enzyme catalyses (S)-dihydroorotate + a quinone = orotate + a quinol. It participates in pyrimidine metabolism; UMP biosynthesis via de novo pathway; orotate from (S)-dihydroorotate (quinone route): step 1/1. Functionally, catalyzes the conversion of dihydroorotate to orotate with quinone as electron acceptor. This Pectobacterium carotovorum subsp. carotovorum (strain PC1) protein is Dihydroorotate dehydrogenase (quinone).